We begin with the raw amino-acid sequence, 37 residues long: Ice-structuring protein 3 (37 aa).

It belongs to the type-I AFP family.

In terms of biological role, contributes to protect fish blood from freezing at subzero sea water temperatures. Lowers the blood freezing point. Binds to nascent ice crystals and prevents further growth. The protein is Ice-structuring protein 3 of Pseudopleuronectes americanus (Winter flounder).